The primary structure comprises 421 residues: Zinc finger protein 57 (421 aa).

The 74-residue stretch at 15–88 folds into the KRAB domain; it reads VSYEDVAVSF…SCTGVFKGGP (74 aa). The segment at 90–113 adopts a C2H2-type 1; degenerate zinc-finger fold; that stretch reads FFCLTCGKCFKKNTFLFNHQFPVR. 2 C2H2-type zinc fingers span residues 140–162 and 168–190; these read FFCN…RRAH and RSCP…LKVH. A disordered region spans residues 191–221; that stretch reads QNKPAASNQAGNQASNQRLKSRVPPTTPRSQ. Residues 195–207 show a composition bias toward low complexity; it reads AASNQAGNQASNQ. The segment at 264–286 adopts a C2H2-type 4 zinc-finger fold; the sequence is ISCPYCHITFTMRTCLLTHLKIH. Residues 313 to 332 form a C2H2-type 5; degenerate zinc finger; sequence YTCPVCDSSFRGKESLLDHL. Positions 371–421 are disordered; that stretch reads GKRMESRRRRRKRACTENPETEGLSGKGRVAPWEMEGATSPESPVTEEDSD.

The protein belongs to the krueppel C2H2-type zinc-finger protein family. As to expression, expressed in oocytes and in a subset of adult tissues. Expressed at high levels in testis, and at low levels in cerebellum. Present in sciatic nerve and spinal cord (at protein level).

It is found in the nucleus. Its function is as follows. Transcription regulator required to maintain maternal and paternal gene imprinting, a process by which gene expression is restricted in a parent of origin-specific manner by epigenetic modification of genomic DNA and chromatin, including DNA methylation. Acts by controlling DNA methylation during the earliest multicellular stages of development at multiple imprinting control regions (ICRs). Acts together with ZNF445, but ZFP57 plays the predominant role in imprinting maintenance. In contrast, in humans, ZNF445 seems to be the major factor early embryonic imprinting maintenance. Required for the establishment of maternal methylation imprints at SNRPN locus. Acts as a transcriptional repressor in Schwann cells. Binds to a 5'-TGCCGC-3' consensus sequence and recognizes the methylated CpG within this element. This chain is Zinc finger protein 57 (Zfp57), found in Mus musculus (Mouse).